Reading from the N-terminus, the 401-residue chain is Exodeoxyribonuclease 7 large subunit (401 aa).

It belongs to the XseA family. As to quaternary structure, heterooligomer composed of large and small subunits.

The protein localises to the cytoplasm. The enzyme catalyses Exonucleolytic cleavage in either 5'- to 3'- or 3'- to 5'-direction to yield nucleoside 5'-phosphates.. Functionally, bidirectionally degrades single-stranded DNA into large acid-insoluble oligonucleotides, which are then degraded further into small acid-soluble oligonucleotides. This chain is Exodeoxyribonuclease 7 large subunit, found in Thermoanaerobacter pseudethanolicus (strain ATCC 33223 / 39E) (Clostridium thermohydrosulfuricum).